A 167-amino-acid polypeptide reads, in one-letter code: Probable chorismate pyruvate-lyase (167 aa).

3 residues coordinate substrate: Arg-71, Ile-110, and Glu-150.

Belongs to the UbiC family.

It is found in the cytoplasm. The enzyme catalyses chorismate = 4-hydroxybenzoate + pyruvate. The protein operates within cofactor biosynthesis; ubiquinone biosynthesis. Removes the pyruvyl group from chorismate, with concomitant aromatization of the ring, to provide 4-hydroxybenzoate (4HB) for the ubiquinone pathway. The chain is Probable chorismate pyruvate-lyase from Acinetobacter baylyi (strain ATCC 33305 / BD413 / ADP1).